The primary structure comprises 144 residues: Pleckstrin homology-like domain family A member 2 (144 aa).

One can recognise a PH domain in the interval 18–111 (ILCEGELEKR…AAITMALIDF (94 aa)). Serine 140 bears the Phosphoserine mark.

It belongs to the PHLDA2 family. In terms of tissue distribution, specifically expressed at high levels in extraembryonic tissues in the developing conceptus (at protein level). Expressed in placenta and yolc sac. Expressed at low levels in fetal liver and kidney.

It is found in the cytoplasm. The protein localises to the membrane. Its function is as follows. Plays a role in regulating placenta growth. May act via its PH domain that competes with other PH domain-containing proteins, thereby preventing their binding to membrane lipids. This chain is Pleckstrin homology-like domain family A member 2 (Phlda2), found in Mus musculus (Mouse).